A 78-amino-acid chain; its full sequence is Small ribosomal subunit protein bS18 (78 aa).

It belongs to the bacterial ribosomal protein bS18 family. As to quaternary structure, part of the 30S ribosomal subunit. Forms a tight heterodimer with protein bS6.

Binds as a heterodimer with protein bS6 to the central domain of the 16S rRNA, where it helps stabilize the platform of the 30S subunit. This chain is Small ribosomal subunit protein bS18, found in Beutenbergia cavernae (strain ATCC BAA-8 / DSM 12333 / CCUG 43141 / JCM 11478 / NBRC 16432 / NCIMB 13614 / HKI 0122).